Consider the following 402-residue polypeptide: Protein lag-2 (402 aa).

The signal sequence occupies residues 1–15 (MIAYFLLLLTCLPVL). Over 16-279 (QARVEVHQEF…TTTTPTTVEI (264 aa)) the chain is Extracellular. N-linked (GlcNAc...) asparagine glycans are attached at residues asparagine 72 and asparagine 105. In terms of domain architecture, DSL spans 122–166 (VTCARNYFGNRCENFCDAHLAKAARKRCDAMGRLRCDIGWMGPHC). 9 disulfides stabilise this stretch: cysteine 124–cysteine 133, cysteine 137–cysteine 149, cysteine 157–cysteine 166, cysteine 175–cysteine 183, cysteine 177–cysteine 204, cysteine 206–cysteine 215, cysteine 233–cysteine 245, cysteine 239–cysteine 254, and cysteine 256–cysteine 265. 2 EGF-like domains span residues 171–216 (DPRK…TRCE) and 229–266 (RPDA…EFCE). A glycan (N-linked (GlcNAc...) asparagine) is linked at asparagine 194. Residues 280–306 (TVSTSGYSSAVYITVALFVIFSIIIGC) form a helical membrane-spanning segment. Topologically, residues 307–402 (FKYKFKPMRQ…PPSIPACHYV (96 aa)) are cytoplasmic.

May interact with lin-12 / Notch receptor. Expressed in the gonad distal tip cell (DTC) of hermaphrodites.

It localises to the cell membrane. In terms of biological role, probable ligand for lin-12/Notch and glp-1/Notch receptors and involved in the mediation of Notch signaling. Involved in the lin-12/Notch pathway signaling of cell fate in vulval precursor cells (VPCs) and in the postembryonic mesodermal lineage (M lineage), acting redundantly with dsl-1 and apx-1. Functions in uterine cells to promote basement membrane mobility during tissue remodeling. Required for oocyte growth control, acting redundantly with apx-1, perhaps signaling via the glp-1/Notch pathway. Plays a role in Notch-dependent induction of left-right asymmetry in interneurons and motoneurons. Involved in maintaining the developmentally arrested larval state known as dauer, probably signaling in the glp-1/Notch pathway. Required for normal sleep bout quantity and arousal thresholds during the transition from the last larval stage to adulthood in well-fed animals. The chain is Protein lag-2 from Caenorhabditis elegans.